The following is a 185-amino-acid chain: Elongation factor P (185 aa).

It belongs to the elongation factor P family.

It localises to the cytoplasm. It participates in protein biosynthesis; polypeptide chain elongation. In terms of biological role, involved in peptide bond synthesis. Stimulates efficient translation and peptide-bond synthesis on native or reconstituted 70S ribosomes in vitro. Probably functions indirectly by altering the affinity of the ribosome for aminoacyl-tRNA, thus increasing their reactivity as acceptors for peptidyl transferase. This Clostridium botulinum (strain Alaska E43 / Type E3) protein is Elongation factor P.